Reading from the N-terminus, the 497-residue chain is Alkane hydroxylase MAH1 (497 aa).

A helical membrane pass occupies residues 3–23; that stretch reads MLGFYVTFIFFLVCLFTYFFL. Residue cysteine 444 coordinates heme.

Belongs to the cytochrome P450 family. Heme is required as a cofactor. Expressed in the expanding regions of the inflorescence stems, specifically to the epidermal pavement cells, petioles and siliques.

The protein resides in the endoplasmic reticulum membrane. In terms of biological role, involved in the formation of secondary alcohols and ketones in stem cuticular wax. Catalyzes the hydroxylation of a methylene unit in the middle of alkane molecules to form secondary alcohols and possibly also a second hydroxylation leading to the corresponding ketones. This is Alkane hydroxylase MAH1 from Arabidopsis thaliana (Mouse-ear cress).